Reading from the N-terminus, the 1097-residue chain is RE1-silencing transcription factor (1097 aa).

The tract at residues 32-122 (DLHDLSKAEL…SLELSVVEPQ (91 aa)) is interaction with SIN3A. The interaction with SIN3B stretch occupies residues 43-57 (APQLIMLANVALTGE). 2 disordered regions span residues 83-103 (NFSD…KGEP) and 127-159 (ASGA…TKPF). Positions 86-96 (DSEEGEGLEES) are enriched in acidic residues. The interaction with ZFP90 stretch occupies residues 145-418 (PGAEDKGKSS…KSKHPTCPNK (274 aa)). The C2H2-type 1 zinc finger occupies 159-181 (FRCKPCQYEAESEEQFVHHIRVH). The tract at residues 201-212 (SGSSTAEEGDFS) is required for binding to the neuron-restrictive silencer element. 7 consecutive C2H2-type zinc fingers follow at residues 216–238 (IRCD…LKHH), 248–270 (YKCI…LRNH), 276–298 (YTCG…VRTH), 304–326 (YKCE…MRTH), 332–355 (FKCD…RQVH), 361–383 (LNCP…VELH), and 389–412 (FNCP…KSKH). Basic and acidic residues predominate over residues 452–479 (KIKGDVAGKKNEKSVKAEKRDVSKEKKP). 4 disordered regions span residues 452 to 642 (KIKG…MEGA), 774 to 837 (KEPV…EQVL), 853 to 938 (ESVS…NGKH), and 961 to 1049 (GINS…NAKE). Residues 480-490 (SNNVSVIQVTT) are compositionally biased toward polar residues. Basic and acidic residues-rich tracts occupy residues 495-504 (SVTEVKEMDV) and 559-570 (PKGDSKVEENKK). Residues 577–593 (KSTKKKTLKNKSSKKSS) show a composition bias toward basic residues. A compositionally biased stretch (basic and acidic residues) spans 803-836 (PPLHMEPISKKPPLRKDKKEKSNMQSERARKEQV). Ser864 is modified (phosphoserine). The span at 913–930 (INESTHISSSGQNLNTPE) shows a compositional bias: polar residues. Phosphoserine is present on Ser971. Residues 1009–1087 (EGIHSHEGSD…HLNRHLVNVY (79 aa)) are interaction with RCOR1. The C2H2-type 9 zinc-finger motif lies at 1060-1082 (FVCIFCDRSFRKGKDYSKHLNRH).

As to quaternary structure, isoform 1 and isoform 3 form heterodimers. Isoform 3: Forms homodimers and homooligomers; binds to the neuron-restrictive silencer element (NRSE) as monomer. Interacts with SIN3A, SIN3B and RCOR1. Interacts with CDYL. Interacts with EHMT1 and EHMT2 only in the presence of CDYL. Part of a complex containing at least CDYL, REST, WIZ, SETB1, EHMT1 and EHMT2. Interacts (via zinc-finger DNA-binding domain) with ZFP90 (via N- and C-termini); the interaction inhibits REST repressor activity. Interacts (via C2H2-type zinc finger 5) with PRICKLE1. Interacts with FBXW11 and BTRC. Interacts with USP7. Post-translationally, O-glycosylated. Phosphorylated; phosphorylation is required for ubiquitination. In terms of processing, ubiquitinated; ubiquitination is mediated by BTRC and leads to proteasomal degradation in G2 phase. Ubiquitination increases during neuronal differentiation. Deubiquitinated by USP7; leading to its stabilization and promoting the maintenance of neural progenitor cells. Expressed in neurons of the prefrontal cortex, in hippocampal pyramidal neurons, dentate gyrus granule neurons and cerebellar Purkinje and granule neurons (at protein level). Expressed in dopaminergic neurons of the substantia nigra (at protein level). Expressed in neural progenitor cells (at protein level). In patients suffering from Alzheimer disease, frontotemporal dementia or dementia with Lewy bodies, decreased nuclear levels have been observed in neurons of the prefrontal cortex and the hippocampus, but not in neurons of the dentate gyrus and cerebellum (at protein level). In patients with Parkinson disease or dementia with Lewy bodies, decreased nuclear levels have been observed in dopaminergic neurons and in cortical neurons and localization to Lewy bodies and pale bodies was detected (at protein level). Expressed at higher levels in weakly invasive breast cancer cell lines and at lower levels in highly invasive breast cancer lines (at protein level). Ubiquitous. Expressed at higher levels in the tissues of the lymphocytic compartment, including spleen, thymus, peripheral blood lymphocytes and ovary.

Its subcellular location is the nucleus. The protein resides in the cytoplasm. Its function is as follows. Transcriptional repressor which binds neuron-restrictive silencer element (NRSE) and represses neuronal gene transcription in non-neuronal cells. Restricts the expression of neuronal genes by associating with two distinct corepressors, SIN3A and RCOR1, which in turn recruit histone deacetylase to the promoters of REST-regulated genes. Mediates repression by recruiting the BHC complex at RE1/NRSE sites which acts by deacetylating and demethylating specific sites on histones, thereby acting as a chromatin modifier. Transcriptional repression by REST-CDYL via the recruitment of histone methyltransferase EHMT2 may be important in transformation suppression. Represses the expression of SRRM4 in non-neural cells to prevent the activation of neural-specific splicing events and to prevent production of REST isoform 3. Repressor activity may be inhibited by forming heterodimers with isoform 3, thereby preventing binding to NRSE or binding to corepressors and leading to derepression of target genes. Also maintains repression of neuronal genes in neural stem cells, and allows transcription and differentiation into neurons by dissociation from RE1/NRSE sites of target genes. Thereby is involved in maintaining the quiescent state of adult neural stem cells and preventing premature differentiation into mature neurons. Plays a role in the developmental switch in synaptic NMDA receptor composition during postnatal development, by repressing GRIN2B expression and thereby altering NMDA receptor properties from containing primarily GRIN2B to primarily GRIN2A subunits. Acts as a regulator of osteoblast differentiation. Key repressor of gene expression in hypoxia; represses genes in hypoxia by direct binding to an RE1/NRSE site on their promoter regions. May also function in stress resistance in the brain during aging; possibly by regulating expression of genes involved in cell death and in the stress response. Repressor of gene expression in the hippocampus after ischemia by directly binding to RE1/NRSE sites and recruiting SIN3A and RCOR1 to promoters of target genes, thereby promoting changes in chromatin modifications and ischemia-induced cell death. After ischemia, might play a role in repression of miR-132 expression in hippocampal neurons, thereby leading to neuronal cell death. Negatively regulates the expression of SRRM3 in breast cancer cell lines. In terms of biological role, binds to the 3' region of the neuron-restrictive silencer element (NRSE), with lower affinity than full-length REST isoform 1. Exhibits weaker repressor activity compared to isoform 1. May negatively regulate the repressor activity of isoform 1 by binding to isoform 1, thereby preventing its binding to NRSE and leading to derepression of target genes. However, in another study, does not appear to be implicated in repressor activity of a NRSE motif-containing reporter construct nor in inhibitory activity on the isoform 1 transcriptional repressor activity. Post-transcriptional inactivation of REST by SRRM4-dependent alternative splicing into isoform 3 is required in mechanosensory hair cells in the inner ear for derepression of neuronal genes and hearing. The chain is RE1-silencing transcription factor (REST) from Homo sapiens (Human).